The primary structure comprises 139 residues: ATP synthase epsilon chain (139 aa).

The protein belongs to the ATPase epsilon chain family. F-type ATPases have 2 components, CF(1) - the catalytic core - and CF(0) - the membrane proton channel. CF(1) has five subunits: alpha(3), beta(3), gamma(1), delta(1), epsilon(1). CF(0) has three main subunits: a, b and c.

The protein resides in the cell inner membrane. Produces ATP from ADP in the presence of a proton gradient across the membrane. In Nitrosospira multiformis (strain ATCC 25196 / NCIMB 11849 / C 71), this protein is ATP synthase epsilon chain.